We begin with the raw amino-acid sequence, 449 residues long: C4-dicarboxylate transport protein 1 (449 aa).

Helical transmembrane passes span 14–34, 47–67, 83–103, 157–177, 195–215, 226–246, 312–332, 359–379, and 385–405; these read SIFL…VGIP, FIKL…VNGI, SVIY…VVAY, ILQV…VGEQ, IMGM…AFTT, LGAL…AVLG, FSIY…TPLA, VILA…LVLV, and FMGI…TVTI.

It belongs to the dicarboxylate/amino acid:cation symporter (DAACS) (TC 2.A.23) family.

It is found in the cell inner membrane. In terms of biological role, responsible for the transport of dicarboxylates such as succinate, fumarate, and malate from the periplasm across the membrane. The protein is C4-dicarboxylate transport protein 1 of Pseudomonas aeruginosa (strain UCBPP-PA14).